The following is a 222-amino-acid chain: Protein Thf1 (222 aa).

Residues 169–208 are a coiled coil; it reads IEKVKRDLELYRSNLDKINQARSLMKELVEQERKRRAQQT. The tract at residues 197 to 222 is disordered; the sequence is VEQERKRRAQQTSAPPAVDASSDAPA. Residues 209-222 show a composition bias toward low complexity; sequence SAPPAVDASSDAPA.

It belongs to the THF1 family.

Its function is as follows. May be involved in photosynthetic membrane biogenesis. This chain is Protein Thf1, found in Thermosynechococcus vestitus (strain NIES-2133 / IAM M-273 / BP-1).